A 310-amino-acid polypeptide reads, in one-letter code: 5'-adenylylsulfate reductase-like 4 (310 aa).

The N-terminal stretch at 1-22 is a signal peptide; the sequence is MEKEILLLLLVIMFLTVADVDA. The Thioredoxin domain occupies 49–168; sequence GVESDERPRF…LVAFYSDVTG (120 aa). N-linked (GlcNAc...) asparagine glycans are attached at residues Asn143 and Asn190. The chain crosses the membrane as a helical span at residues 217 to 237; it reads LAIVFVLLRLLHLIYPTLVVF.

It is found in the membrane. The protein is 5'-adenylylsulfate reductase-like 4 (APRL4) of Arabidopsis thaliana (Mouse-ear cress).